A 162-amino-acid polypeptide reads, in one-letter code: Probable ergosterol biosynthetic protein 28 homolog (162 aa).

A run of 4 helical transmembrane segments spans residues 7–25, 40–60, 69–89, and 96–116; these read AWMS…MCYA, LSRA…VLIF, IAHI…VFFY, and IVTV…LTFL.

This sequence belongs to the ERG28 family. Expressed in tissues including muscles, intestine and neurons.

Its subcellular location is the endoplasmic reticulum membrane. The protein localises to the cell projection. The protein resides in the dendrite. Functionally, promotes the translocation of slo-1 potassium ion channels from the endoplasmic reticulum to its final destination at the plasma membrane, probably by shielding from premature proteasomal degradation in the endoplasmic reticulum. Maintains the levels of slo-1 potassium ion channel at the presynaptic neurons. The protein is Probable ergosterol biosynthetic protein 28 homolog of Caenorhabditis elegans.